The following is a 151-amino-acid chain: Chaperonin GroEL (151 aa).

41-45 (DGTTT) is a binding site for ATP.

Belongs to the chaperonin (HSP60) family. In terms of assembly, forms a cylinder of 14 subunits composed of two heptameric rings stacked back-to-back. Interacts with the co-chaperonin GroES.

The protein localises to the cytoplasm. It catalyses the reaction ATP + H2O + a folded polypeptide = ADP + phosphate + an unfolded polypeptide.. Functionally, together with its co-chaperonin GroES, plays an essential role in assisting protein folding. The GroEL-GroES system forms a nano-cage that allows encapsulation of the non-native substrate proteins and provides a physical environment optimized to promote and accelerate protein folding. This chain is Chaperonin GroEL, found in Mycolicibacterium fortuitum (Mycobacterium fortuitum).